Consider the following 110-residue polypeptide: Large ribosomal subunit protein uL22 (110 aa).

This sequence belongs to the universal ribosomal protein uL22 family. In terms of assembly, part of the 50S ribosomal subunit.

In terms of biological role, this protein binds specifically to 23S rRNA; its binding is stimulated by other ribosomal proteins, e.g. L4, L17, and L20. It is important during the early stages of 50S assembly. It makes multiple contacts with different domains of the 23S rRNA in the assembled 50S subunit and ribosome. The globular domain of the protein is located near the polypeptide exit tunnel on the outside of the subunit, while an extended beta-hairpin is found that lines the wall of the exit tunnel in the center of the 70S ribosome. The protein is Large ribosomal subunit protein uL22 of Vibrio campbellii (strain ATCC BAA-1116).